A 196-amino-acid chain; its full sequence is Potassium-transporting ATPase KdpC subunit (196 aa).

Residues 17–37 (LLLLVATAGLGLVYPLAVFAV) traverse the membrane as a helical segment. A disordered region spans residues 73–93 (QPRPSAAGDGYDPTASGASNL).

The protein belongs to the KdpC family. In terms of assembly, the system is composed of three essential subunits: KdpA, KdpB and KdpC.

It localises to the cell membrane. Functionally, part of the high-affinity ATP-driven potassium transport (or Kdp) system, which catalyzes the hydrolysis of ATP coupled with the electrogenic transport of potassium into the cytoplasm. This subunit acts as a catalytic chaperone that increases the ATP-binding affinity of the ATP-hydrolyzing subunit KdpB by the formation of a transient KdpB/KdpC/ATP ternary complex. This is Potassium-transporting ATPase KdpC subunit from Kineococcus radiotolerans (strain ATCC BAA-149 / DSM 14245 / SRS30216).